The chain runs to 509 residues: Bifunctional purine biosynthesis protein PurH (509 aa).

Residues 1-145 (MIKRALISVF…KSFKDVVVIS (145 aa)) enclose the MGS-like domain.

Belongs to the PurH family.

The enzyme catalyses (6R)-10-formyltetrahydrofolate + 5-amino-1-(5-phospho-beta-D-ribosyl)imidazole-4-carboxamide = 5-formamido-1-(5-phospho-D-ribosyl)imidazole-4-carboxamide + (6S)-5,6,7,8-tetrahydrofolate. It carries out the reaction IMP + H2O = 5-formamido-1-(5-phospho-D-ribosyl)imidazole-4-carboxamide. It functions in the pathway purine metabolism; IMP biosynthesis via de novo pathway; 5-formamido-1-(5-phospho-D-ribosyl)imidazole-4-carboxamide from 5-amino-1-(5-phospho-D-ribosyl)imidazole-4-carboxamide (10-formyl THF route): step 1/1. The protein operates within purine metabolism; IMP biosynthesis via de novo pathway; IMP from 5-formamido-1-(5-phospho-D-ribosyl)imidazole-4-carboxamide: step 1/1. The chain is Bifunctional purine biosynthesis protein PurH from Brachyspira hyodysenteriae (strain ATCC 49526 / WA1).